A 113-amino-acid polypeptide reads, in one-letter code: MDGMIAMLPAPLQQLSSHIDFQGQKVAERTYQVILTLAGIIGFFVGYSTQQLSYAMYTVMGAAVFTALIILPPWPFLFRKNPIVWQTPIEEQEASSSSDNEKKDKKKETKKTK.

Residues 1–32 (MDGMIAMLPAPLQQLSSHIDFQGQKVAERTYQ) are Cytoplasmic-facing. The helical transmembrane segment at 33-53 (VILTLAGIIGFFVGYSTQQLS) threads the bilayer. Residues 54 to 57 (YAMY) lie on the Lumenal side of the membrane. The chain crosses the membrane as a helical span at residues 58 to 78 (TVMGAAVFTALIILPPWPFLF). Topologically, residues 79-113 (RKNPIVWQTPIEEQEASSSSDNEKKDKKKETKKTK) are cytoplasmic. A disordered region spans residues 89 to 113 (IEEQEASSSSDNEKKDKKKETKKTK).

This sequence belongs to the SPCS1 family. In terms of assembly, component of the signal peptidase complex (SPC) composed of a catalytic subunit sec-11 and three accessory subunits spcs-1, spcs-2 and spcs-3. The complex induces a local thinning of the ER membrane which is used to measure the length of the signal peptide (SP) h-region of protein substrates. This ensures the selectivity of the complex towards h-regions shorter than 18-20 amino acids.

It localises to the endoplasmic reticulum membrane. Its function is as follows. Component of the signal peptidase complex (SPC) which catalyzes the cleavage of N-terminal signal sequences from nascent proteins as they are translocated into the lumen of the endoplasmic reticulum. Dispensable for SPC enzymatic activity. This chain is Signal peptidase complex subunit 1, found in Caenorhabditis briggsae.